The sequence spans 966 residues: Protein mes-1 (966 aa).

Positions 1–19 (MKIHHFLTLLCTFLPLTTT) are cleaved as a signal peptide. Over 20 to 470 (ALTNSTPLSL…QASDIPTSVE (451 aa)) the chain is Extracellular. Residues asparagine 62, asparagine 126, asparagine 183, asparagine 214, asparagine 251, and asparagine 372 are each glycosylated (N-linked (GlcNAc...) asparagine). A helical transmembrane segment spans residues 471 to 491 (LMAVVLATSAIFALIALFLLY). At 492-966 (RKRKRDKKAR…FKSVNVAATV (475 aa)) the chain is on the cytoplasmic side. A Protein kinase domain is found at 656–966 (HNFNERIEKQ…FKSVNVAATV (311 aa)). ATP-binding positions include 662 to 670 (IEKQAYWLM) and lysine 685.

This sequence belongs to the protein kinase superfamily.

The protein resides in the cell membrane. During early embryogenesis, controls asymmetric cell division and the asymmetric localization of P granules of germline precursor P2 and its descendant P3. Probably upstream of tyrosine kinase src-1, plays a role in endoderm development by controlling spindle orientation during EMS blastomere cell division. Controls EMS spindle orientation probably by promoting lin-5 and gpr-1/2 enrichment at, and let-99 exclusion from the junction between P2 and EMS cells. The chain is Protein mes-1 from Caenorhabditis elegans.